Here is a 329-residue protein sequence, read N- to C-terminus: Homeobox protein ceh-40 (329 aa).

The region spanning 3 to 186 (EASKSIMDLL…VIQLKKRYLD (184 aa)) is the PBC domain. The tract at residues 10–90 (DLLSEVVKIT…EGVAGPDDSL (81 aa)) is PBC-A. A PBC-B region spans residues 93-186 (IQEAAGTDQY…VIQLKKRYLD (94 aa)). Residues 187–249 (ARRKRRNFSK…NKRIRYKKTM (63 aa)) constitute a DNA-binding region (homeobox; TALE-type). Residues 248 to 275 (TMAKNEDERRENRKPEDRPPPGAPGAPY) form a disordered region. A compositionally biased stretch (basic and acidic residues) spans 250-266 (AKNEDERRENRKPEDRP).

It belongs to the TALE/PBX homeobox family. In terms of tissue distribution, expressed in head dopaminergic neurons.

The protein localises to the nucleus. Its function is as follows. Plays a role in regulating gene expression in dopaminergic neurons, acting redundantly with homeobox protein ceh-20 in head neurons. May activate dopamine pathway genes in concert with ETS domain-containing protein ast-1, and homeobox proteins ceh-43 and ceh-20. This chain is Homeobox protein ceh-40 (ceh-40), found in Caenorhabditis elegans.